A 522-amino-acid chain; its full sequence is Probable poly(ADP-ribose) glycohydrolase 2 (522 aa).

The protein belongs to the poly(ADP-ribose) glycohydrolase family.

The catalysed reaction is [(1''-&gt;2')-ADP-alpha-D-ribose](n) + H2O = [(1''-&gt;2')-ADP-alpha-D-ribose](n-1) + ADP-D-ribose. Poly(ADP-ribose) synthesized after DNA damage is only present transiently and is rapidly degraded by poly(ADP-ribose) glycohydrolase. This Arabidopsis thaliana (Mouse-ear cress) protein is Probable poly(ADP-ribose) glycohydrolase 2 (PARG2).